A 211-amino-acid chain; its full sequence is ATP phosphoribosyltransferase (211 aa).

Belongs to the ATP phosphoribosyltransferase family. Short subfamily. As to quaternary structure, heteromultimer composed of HisG and HisZ subunits.

It is found in the cytoplasm. It catalyses the reaction 1-(5-phospho-beta-D-ribosyl)-ATP + diphosphate = 5-phospho-alpha-D-ribose 1-diphosphate + ATP. It functions in the pathway amino-acid biosynthesis; L-histidine biosynthesis; L-histidine from 5-phospho-alpha-D-ribose 1-diphosphate: step 1/9. In terms of biological role, catalyzes the condensation of ATP and 5-phosphoribose 1-diphosphate to form N'-(5'-phosphoribosyl)-ATP (PR-ATP). Has a crucial role in the pathway because the rate of histidine biosynthesis seems to be controlled primarily by regulation of HisG enzymatic activity. In Pseudomonas putida (strain ATCC 700007 / DSM 6899 / JCM 31910 / BCRC 17059 / LMG 24140 / F1), this protein is ATP phosphoribosyltransferase.